The following is a 381-amino-acid chain: Homoserine O-succinyltransferase (381 aa).

Positions N45–D360 constitute an AB hydrolase-1 domain. The active-site Nucleophile is S151. Residue R221 participates in substrate binding. Catalysis depends on residues D321 and H354. Substrate is bound at residue D355.

This sequence belongs to the AB hydrolase superfamily. MetX family. In terms of assembly, homodimer.

The protein resides in the cytoplasm. The enzyme catalyses L-homoserine + succinyl-CoA = O-succinyl-L-homoserine + CoA. It participates in amino-acid biosynthesis; L-methionine biosynthesis via de novo pathway; O-succinyl-L-homoserine from L-homoserine: step 1/1. In terms of biological role, transfers a succinyl group from succinyl-CoA to L-homoserine, forming succinyl-L-homoserine. This Burkholderia vietnamiensis (strain G4 / LMG 22486) (Burkholderia cepacia (strain R1808)) protein is Homoserine O-succinyltransferase.